A 572-amino-acid chain; its full sequence is Proline--tRNA ligase (572 aa).

Belongs to the class-II aminoacyl-tRNA synthetase family. ProS type 1 subfamily. In terms of assembly, homodimer.

It localises to the cytoplasm. The enzyme catalyses tRNA(Pro) + L-proline + ATP = L-prolyl-tRNA(Pro) + AMP + diphosphate. Functionally, catalyzes the attachment of proline to tRNA(Pro) in a two-step reaction: proline is first activated by ATP to form Pro-AMP and then transferred to the acceptor end of tRNA(Pro). As ProRS can inadvertently accommodate and process non-cognate amino acids such as alanine and cysteine, to avoid such errors it has two additional distinct editing activities against alanine. One activity is designated as 'pretransfer' editing and involves the tRNA(Pro)-independent hydrolysis of activated Ala-AMP. The other activity is designated 'posttransfer' editing and involves deacylation of mischarged Ala-tRNA(Pro). The misacylated Cys-tRNA(Pro) is not edited by ProRS. The protein is Proline--tRNA ligase of Yersinia enterocolitica serotype O:8 / biotype 1B (strain NCTC 13174 / 8081).